A 213-amino-acid polypeptide reads, in one-letter code: Orotate phosphoribosyltransferase (213 aa).

Lys26 contacts 5-phospho-alpha-D-ribose 1-diphosphate. 34-35 (FF) contributes to the orotate binding site. 5-phospho-alpha-D-ribose 1-diphosphate-binding positions include 72–73 (YK), Arg99, Lys100, Lys103, His105, and 124–132 (DDVITAGTA). 2 residues coordinate orotate: Thr128 and Arg156.

It belongs to the purine/pyrimidine phosphoribosyltransferase family. PyrE subfamily. In terms of assembly, homodimer. Requires Mg(2+) as cofactor.

It carries out the reaction orotidine 5'-phosphate + diphosphate = orotate + 5-phospho-alpha-D-ribose 1-diphosphate. The protein operates within pyrimidine metabolism; UMP biosynthesis via de novo pathway; UMP from orotate: step 1/2. Catalyzes the transfer of a ribosyl phosphate group from 5-phosphoribose 1-diphosphate to orotate, leading to the formation of orotidine monophosphate (OMP). This chain is Orotate phosphoribosyltransferase, found in Escherichia coli O127:H6 (strain E2348/69 / EPEC).